Reading from the N-terminus, the 674-residue chain is DNA ligase (674 aa).

NAD(+) contacts are provided by residues 35–39 (DAEYD), 84–85 (SL), and Glu116. Lys118 functions as the N6-AMP-lysine intermediate in the catalytic mechanism. The NAD(+) site is built by Arg139, Glu176, Lys293, and Lys317. Zn(2+)-binding residues include Cys411, Cys414, Cys429, and Cys435. Positions 593-674 (DGVKPLEGTT…LLALLEEHGV (82 aa)) constitute a BRCT domain.

It belongs to the NAD-dependent DNA ligase family. LigA subfamily. The cofactor is Mg(2+). Requires Mn(2+) as cofactor.

It catalyses the reaction NAD(+) + (deoxyribonucleotide)n-3'-hydroxyl + 5'-phospho-(deoxyribonucleotide)m = (deoxyribonucleotide)n+m + AMP + beta-nicotinamide D-nucleotide.. Functionally, DNA ligase that catalyzes the formation of phosphodiester linkages between 5'-phosphoryl and 3'-hydroxyl groups in double-stranded DNA using NAD as a coenzyme and as the energy source for the reaction. It is essential for DNA replication and repair of damaged DNA. In Saccharophagus degradans (strain 2-40 / ATCC 43961 / DSM 17024), this protein is DNA ligase.